Consider the following 447-residue polypeptide: 2-oxoadipate dioxygenase/decarboxylase (447 aa).

2-oxoadipate-binding residues include His-68, Arg-72, and His-224. A Fe(2+)-binding site is contributed by His-68. 2 residues coordinate Fe(2+): His-224 and Glu-290. Val-391 contacts 2-oxoadipate.

The protein belongs to the 2-oxoadipate dioxygenase/decarboxylase family. The cofactor is Fe(2+).

It catalyses the reaction 2-oxoadipate + O2 = (R)-2-hydroxyglutarate + CO2. In terms of biological role, catalyzes the decarboxylation and hydroxylation of 2-oxoadipate (2OA) to form D-2-hydroxyglutarate (D-2-HGA). The polypeptide is 2-oxoadipate dioxygenase/decarboxylase (Shigella flexneri).